The primary structure comprises 42 residues: uncharacterized protein (42 aa).

Residues 1–42 form a disordered region; the sequence is MTTGKPQSFEKMRTPFPGRSKAKGPQSDIIPSAPPNTPVTEH. Positions 32 to 42 are enriched in pro residues; the sequence is SAPPNTPVTEH.

This is an uncharacterized protein from Schizosaccharomyces pombe (strain 972 / ATCC 24843) (Fission yeast).